A 245-amino-acid polypeptide reads, in one-letter code: Thiopurine S-methyltransferase (245 aa).

29-40 (WQEKWVNHKTGF) is an S-adenosyl-L-methionine binding site. F40 is a binding site for substrate. Residue K58 is modified to N6-acetyllysine. S-adenosyl-L-methionine-binding residues include L69, E90, and R152.

Belongs to the class I-like SAM-binding methyltransferase superfamily. TPMT family. Monomer.

The protein localises to the cytoplasm. The catalysed reaction is S-adenosyl-L-methionine + a thiopurine = S-adenosyl-L-homocysteine + a thiopurine S-methylether.. In Bos taurus (Bovine), this protein is Thiopurine S-methyltransferase (TPMT).